The primary structure comprises 309 residues: Ornithine carbamoyltransferase (309 aa).

Residues 57 to 60, glutamine 84, arginine 108, and 135 to 138 contribute to the carbamoyl phosphate site; these read STRT and HPCQ. Residues asparagine 166, aspartate 226, and 230–231 contribute to the L-ornithine site; that span reads SM. Residues 265 to 266 and arginine 293 contribute to the carbamoyl phosphate site; that span reads CL.

The protein belongs to the aspartate/ornithine carbamoyltransferase superfamily. OTCase family.

The protein localises to the cytoplasm. The enzyme catalyses carbamoyl phosphate + L-ornithine = L-citrulline + phosphate + H(+). It participates in amino-acid biosynthesis; L-arginine biosynthesis; L-arginine from L-ornithine and carbamoyl phosphate: step 1/3. Reversibly catalyzes the transfer of the carbamoyl group from carbamoyl phosphate (CP) to the N(epsilon) atom of ornithine (ORN) to produce L-citrulline. The polypeptide is Ornithine carbamoyltransferase (Rhizorhabdus wittichii (strain DSM 6014 / CCUG 31198 / JCM 15750 / NBRC 105917 / EY 4224 / RW1) (Sphingomonas wittichii)).